Here is a 102-residue protein sequence, read N- to C-terminus: Small ribosomal subunit protein eS24 (102 aa).

The protein belongs to the eukaryotic ribosomal protein eS24 family.

This Methanococcus aeolicus (strain ATCC BAA-1280 / DSM 17508 / OCM 812 / Nankai-3) protein is Small ribosomal subunit protein eS24.